A 102-amino-acid chain; its full sequence is uncharacterized protein (102 aa).

Transmembrane regions (helical) follow at residues 33–55 (VLELLTIISGLVVTLVLVVLVVL) and 57–79 (VVGVVVLVVLLVVVVLLCDVVVA).

The protein resides in the membrane. This is an uncharacterized protein from Saccharomyces cerevisiae (strain ATCC 204508 / S288c) (Baker's yeast).